The chain runs to 131 residues: MINDIISDSLTRIRNAGMRKLETTKLLHSKVIEALVGIFQAKGYIESFNVIEEDKKKFINVVLKYDEKGKSVINELKRISKPGRRVYKGKDEIKRFKNGYGTIVVSTSHGVLANDEAYKAGVGGEILCTIW.

Belongs to the universal ribosomal protein uS8 family. In terms of assembly, part of the 30S ribosomal subunit. Contacts proteins S5 and S12.

Its function is as follows. One of the primary rRNA binding proteins, it binds directly to 16S rRNA central domain where it helps coordinate assembly of the platform of the 30S subunit. The sequence is that of Small ribosomal subunit protein uS8 from Campylobacter jejuni (strain RM1221).